We begin with the raw amino-acid sequence, 349 residues long: N-formyl peptide receptor 3 (349 aa).

At 1-27 (METNFSIPLNETEEVLPEPAGHTVLWI) the chain is on the extracellular side. Residues Asn-4 and Asn-10 are each glycosylated (N-linked (GlcNAc...) asparagine). Residues 28 to 50 (FSLLVHGVTFVFGVLGNGLVIWV) traverse the membrane as a helical segment. Over 51–61 (AGFRMTRTVNT) the chain is Cytoplasmic. A helical membrane pass occupies residues 62-83 (ICYLNLALADFSFSAILPFRMV). The Extracellular segment spans residues 84–100 (SVAMREKWPFGSFLCKL). Cysteines 98 and 176 form a disulfide. Residues 101–121 (VHVMIDINLFVSVYLITIIAL) traverse the membrane as a helical segment. Residues 122 to 140 (DRCICVLHPAWAQNHRTMS) are Cytoplasmic-facing. A helical membrane pass occupies residues 141–162 (LAKRVMTGLWILTIVLTLPNFI). At 163-205 (FWTTIRTTNGDTYCIFNFAFWGDTAVERLNVFITMAKVFLILH) the chain is on the extracellular side. Residues 206–226 (FIIGFSMPMSIITVCYGIIAA) form a helical membrane-spanning segment. The Cytoplasmic portion of the chain corresponds to 227–242 (KIHRNHMIKSSRPLRV). A helical membrane pass occupies residues 243–266 (FAAVVASFFICWFPYELIGILMAV). Residues 267 to 286 (WLKEMLLNGKYKIILVLINP) are Extracellular-facing. Residues 287–306 (TSSLAFFNSCLNPILYVFMG) traverse the membrane as a helical segment. The Cytoplasmic portion of the chain corresponds to 307 to 349 (RNFQERLIRSLPTSLERALTEVPDSAQTSNTHTTSASPPEETE). A disordered region spans residues 327 to 349 (EVPDSAQTSNTHTTSASPPEETE). The segment covering 331–343 (SAQTSNTHTTSAS) has biased composition (polar residues).

This sequence belongs to the G-protein coupled receptor 1 family.

Its subcellular location is the cell membrane. Functionally, low affinity receptor for N-formyl-methionyl peptides, which are powerful neutrophils chemotactic factors. Binding of FMLP to the receptor causes activation of neutrophils. This response is mediated via a G-protein that activates a phosphatidylinositol-calcium second messenger system. This Pan troglodytes (Chimpanzee) protein is N-formyl peptide receptor 3 (FPR3).